Reading from the N-terminus, the 136-residue chain is Protein K5 (136 aa).

The protein belongs to the poxviridae K5 protein family.

This chain is Protein K5, found in Homo sapiens (Human).